Reading from the N-terminus, the 555-residue chain is MNTSLFKQERQKYIPKLPNILKKDFNNISLVYGENTEAIQDRQALKEFFKNTYGLPIISFTEGESSLSFSKALNIGIILSGGPAPGGHNVISGVFDAIKKFNPNSKLFGFKGGPLGLLENDKIELTESLINSYRNTGGFDIVSSGRTKIETEEHYNKALFVAKENNLNAIIIIGGDDSNTNAAILAEYFKKNGENIQVIGVPKTIDADLRNDHIEISFGFDSATKIYSELIGNLCRDAMSTKKYWHFVKLMGRSASHVALECALKTHPNICIVSEEVLAKKKTLSEIIDEMVSVILKRSLNGDNFGVVIVPEGLIEFIPEVKSLMLELCDIFDKNEGEFKGLNIEKMKEIFVAKLSDYMKGVYLSLPLFIQFELIKSILERDPHGNFNVSRVPTEKLFIEMIQSRLNDMKKRGEYKGSFTPVDHFFGYEGRSAFPSNFDSDYCYSLGYNAVVLILNGLTGYMSCIKNLNLKPTDWIAGGVPLTMLMNMEERYGEKKPVIKKALVDLEGRPFKEFVKNRDKWALNNLYLYPGPVQYFGSSEIVDEITETLKLELLK.

Gly82 is a binding site for diphosphate. Arg146 is a binding site for substrate. Asp176 lines the Mg(2+) pocket. Residues 204–206 (TID), 243–244 (KY), 251–253 (MGR), Glu312, and 428–431 (YEGR) contribute to the substrate site. Asp206 functions as the Proton acceptor in the catalytic mechanism.

Belongs to the phosphofructokinase type A (PFKA) family. PPi-dependent PFK group II subfamily. Clade 'Long' sub-subfamily. Homodimer. The cofactor is Mg(2+).

The protein localises to the cytoplasm. The enzyme catalyses beta-D-fructose 6-phosphate + diphosphate = beta-D-fructose 1,6-bisphosphate + phosphate + H(+). It participates in carbohydrate degradation; glycolysis; D-glyceraldehyde 3-phosphate and glycerone phosphate from D-glucose: step 3/4. Non-allosteric. Functionally, catalyzes the phosphorylation of D-fructose 6-phosphate, the first committing step of glycolysis. Uses inorganic phosphate (PPi) as phosphoryl donor instead of ATP like common ATP-dependent phosphofructokinases (ATP-PFKs), which renders the reaction reversible, and can thus function both in glycolysis and gluconeogenesis. Consistently, PPi-PFK can replace the enzymes of both the forward (ATP-PFK) and reverse (fructose-bisphosphatase (FBPase)) reactions. The sequence is that of Pyrophosphate--fructose 6-phosphate 1-phosphotransferase from Borreliella burgdorferi (strain ATCC 35210 / DSM 4680 / CIP 102532 / B31) (Borrelia burgdorferi).